Here is an 867-residue protein sequence, read N- to C-terminus: MTSAELRARFLKFFADRGHTVVASSSLVPVNDPTLLFTNAGMVQFKDVFLGREHRPYVRAASAQRCVRAGGKHNDLENVGYTARHHTFFEMLGNFSFGDYFKREAIVYAWEFLTEVLMLPPERLWITVYAEDKEAERIWLEEVGVDPGRFTRIATSDNFWSMGDTGPCGPCSEIFYDHGPSVAGGPPGTPEEDGDRYVEIWNLVFMQYERAGDGTLTPLPKPSVDTGMGLERLAAVMQRVRNNYDIDLFRNLVKAAAELAGTTDLAQSSLRVIADHIRSCAFLVTDGVLPSNEGRGYVLRRIIRRAIRHGYKLGIREPFFYKLVGPLCAEMGQAYPELVEARPRVEQVLDKEEERFAETLEQGMKILDVAIRDLGSPVISGDTAFQLYDTYGFPVDLTADVAREHGLQVDMAGFERAMEAQRERARAASHFSVDYSQEIHLDVACEFTGYRNAVEDTRIVALLRDGQAVDRLEAGEDGVVVLEKTPFYAESGGQVGDRGVIRSDSAVFEVADTRKQGSDLILHRGKLREGALLRGAVCRAEVEQSLRLATALNHSATHLLHAALRRVLGEHVTQKGSLVDPERLRFDFSHFEPVSPEQLDEIERLVNREIRRNAEVTAEVMAKDAAMRLGAMALFGEKYGDDVRVLRIGDFSTELCGGIHARRAGDIGLFKIVSESGVAAGVRRIEAVTGAAAVEAVEATERLLRRLAERMKAGRDTLEERLDQMFEKNRALERELERLKAKTAGAAGADLASRAVDIAGVKVLAARVDEADARMLRELVDQLKDRLGSAAIVLAAVEGGKVSLVAGVTRDQTGHIRAGDLVNSVATRIGGKGGGRPDLAQAGGNRPEELQGALDGVPEWVRRMLNA.

Histidine 554, histidine 558, cysteine 656, and histidine 660 together coordinate Zn(2+).

This sequence belongs to the class-II aminoacyl-tRNA synthetase family. It depends on Zn(2+) as a cofactor.

The protein localises to the cytoplasm. The enzyme catalyses tRNA(Ala) + L-alanine + ATP = L-alanyl-tRNA(Ala) + AMP + diphosphate. Its function is as follows. Catalyzes the attachment of alanine to tRNA(Ala) in a two-step reaction: alanine is first activated by ATP to form Ala-AMP and then transferred to the acceptor end of tRNA(Ala). Also edits incorrectly charged Ser-tRNA(Ala) and Gly-tRNA(Ala) via its editing domain. The polypeptide is Alanine--tRNA ligase (Methylococcus capsulatus (strain ATCC 33009 / NCIMB 11132 / Bath)).